Consider the following 94-residue polypeptide: Integration host factor subunit beta (94 aa).

This sequence belongs to the bacterial histone-like protein family. Heterodimer of an alpha and a beta chain.

Functionally, this protein is one of the two subunits of integration host factor, a specific DNA-binding protein that functions in genetic recombination as well as in transcriptional and translational control. The chain is Integration host factor subunit beta from Escherichia coli (strain UTI89 / UPEC).